The following is a 271-amino-acid chain: MPELPEVETALRGISPYLKNFTIEKVVVRQPKLRWAVSEELITLKNVKIVDLTRRAKYLIIHTEKGYIIGHLGMSGSVRIVPQDSAIDKHDHIDIVVNNGKLLRYNDPRRFGAWLWTENLDDFHLFLKLGPEPLSDEFNAEYLFKKSRQKSTALKTFLMDNAVVVGVGNIYTNESLFICGIHPLKLAKNLTRNQCFSLVNTIKDVLRKAIIQGGTTLKDFLQPDGRPGYFAQELLVYGNKDKPCPKCGGKIESLIIGQRNSFFCPKCQKRG.

Pro2 (schiff-base intermediate with DNA) is an active-site residue. Glu3 serves as the catalytic Proton donor. The Proton donor; for beta-elimination activity role is filled by Lys57. DNA-binding residues include His90, Arg109, and Lys150. The FPG-type zinc-finger motif lies at 235 to 269 (LVYGNKDKPCPKCGGKIESLIIGQRNSFFCPKCQK). Residue Arg259 is the Proton donor; for delta-elimination activity of the active site.

Belongs to the FPG family. In terms of assembly, monomer. Zn(2+) serves as cofactor.

It carries out the reaction Hydrolysis of DNA containing ring-opened 7-methylguanine residues, releasing 2,6-diamino-4-hydroxy-5-(N-methyl)formamidopyrimidine.. It catalyses the reaction 2'-deoxyribonucleotide-(2'-deoxyribose 5'-phosphate)-2'-deoxyribonucleotide-DNA = a 3'-end 2'-deoxyribonucleotide-(2,3-dehydro-2,3-deoxyribose 5'-phosphate)-DNA + a 5'-end 5'-phospho-2'-deoxyribonucleoside-DNA + H(+). Functionally, involved in base excision repair of DNA damaged by oxidation or by mutagenic agents. Acts as a DNA glycosylase that recognizes and removes damaged bases. Has a preference for oxidized purines, such as 7,8-dihydro-8-oxoguanine (8-oxoG). Has AP (apurinic/apyrimidinic) lyase activity and introduces nicks in the DNA strand. Cleaves the DNA backbone by beta-delta elimination to generate a single-strand break at the site of the removed base with both 3'- and 5'-phosphates. The chain is Formamidopyrimidine-DNA glycosylase (mutM) from Haemophilus influenzae (strain ATCC 51907 / DSM 11121 / KW20 / Rd).